The chain runs to 379 residues: Putative zinc metalloprotease sll0528 (379 aa).

Transmembrane regions (helical) follow at residues 20-40 (LFGIPFYVNPSWFLILGLVTL) and 54-74 (GGTPWILGLITALLLFASVVA). Position 75 (H75) interacts with Zn(2+). E76 is an active-site residue. H79 lines the Zn(2+) pocket. Helical transmembrane passes span 115 to 135 (FAVAIAGPAVSLVLFLGLTIV), 148 to 168 (IIGLLGMINLALALFNLIPGL), and 212 to 232 (GILNILPIGSFWTILIGWFLL). 2 CBS domains span residues 257 to 315 (VIPN…DWPQ) and 322 to 379 (MQYP…TSAA).

Belongs to the peptidase M50B family. It depends on Zn(2+) as a cofactor.

The protein resides in the cell membrane. This chain is Putative zinc metalloprotease sll0528, found in Synechocystis sp. (strain ATCC 27184 / PCC 6803 / Kazusa).